A 302-amino-acid polypeptide reads, in one-letter code: Beta-1,2-mannobiose phosphorylase (302 aa).

This sequence belongs to the glycosyl hydrolase 130 family. As to quaternary structure, monomer.

It catalyses the reaction beta-D-mannopyranosyl-(1-&gt;2)-D-mannopyranose + phosphate = alpha-D-mannose 1-phosphate + D-mannose. It participates in nucleotide-sugar biosynthesis; GDP-alpha-D-mannose biosynthesis. Its function is as follows. Probably involved in a salvage pathway for GDP-D-mannose biosynthesis. Catalyzes the reversible phosphorolysis of 1,2-beta-oligomannan. In phosphorolytic reactions, prefers beta-1,2-mannobiose (beta-1,2-Man2) as substrate. Produces alpha-D-mannose 1-phosphate, which is the precursor of GDP-D-mannose. The chain is Beta-1,2-mannobiose phosphorylase from Thermoanaerobacter sp. (strain X514).